The primary structure comprises 786 residues: MTDAAQRISELRNELDAHNYRYYVLDEPSVPDAEYDRLFRELQALEAEHPELVTPESPTQRVGGEALSAFGEVRHEVPMLSLGNAFEEDDLRAFDRSVQSGLGLAGGDLFGGGAEVEYSCEPKLDGLAVSLRYENGQLVRGATRGDGSTGEDISANVRTIRNVPLKLQGEGWPQVLEVRGEVFMPKAGFEELNARQAEAGGKTFANPRNAAAGSLRQLDPKITASRPLEFCCYGVGQVSGELPGTQVAMLQQLKAWGIPISRELKLAKGVEACLDYYRDIGQRRMSLAYDIDGVVFKVNNIEDQQQLGFRARTPHWAIAHKFPAQEELTELLDVEFQVGRTGAVTPVARLKPVKVAGVMVANATLHNMDEVARLGVMIGDTVIIRRAGDVIPQVMAVVPERRPADARPVHIPEQCPVCGSAVERTQLIKRSKGKASVSEGSVYRCVGRLSCQAQLKQAIIHFVSRRAMDIEGLGDKTIEQLVDEKLIGSPADLYKLTYEQIIGLEGFAEVSSNKLLAAIENSKRPSLARFIYALGIPDVGEETAKVLARSLASLERVRQALPEVLTYLPDIGLEVAHEIHSFFEDAHNQQVISALLGECGLELQDEGELSAEFSAVATLGGMLDKLNIPTVGPGAAQKLAERFGSLEGVLNGDWLDMRQALPERQAKAVREFFDETANAQRARAIEQQLREFGMHWESEKKVAEGLPLAGQTWVLTGTLEVMSRDVAKEKLESLGAKVAGSVSAKTHCVVAGPGAGSKLAKASELGVKVLDEAQFLEQLKSYGIEA.

Residues 32 to 36 (DAEYD), 81 to 82 (SL), and Glu-121 contribute to the NAD(+) site. The active-site N6-AMP-lysine intermediate is Lys-123. Arg-144, Glu-181, Lys-297, and Lys-321 together coordinate NAD(+). Residues Cys-415, Cys-418, Cys-445, and Cys-451 each contribute to the Zn(2+) site. The BRCT domain maps to 703–786 (AEGLPLAGQT…EQLKSYGIEA (84 aa)).

This sequence belongs to the NAD-dependent DNA ligase family. LigA subfamily. The cofactor is Mg(2+). It depends on Mn(2+) as a cofactor.

It carries out the reaction NAD(+) + (deoxyribonucleotide)n-3'-hydroxyl + 5'-phospho-(deoxyribonucleotide)m = (deoxyribonucleotide)n+m + AMP + beta-nicotinamide D-nucleotide.. In terms of biological role, DNA ligase that catalyzes the formation of phosphodiester linkages between 5'-phosphoryl and 3'-hydroxyl groups in double-stranded DNA using NAD as a coenzyme and as the energy source for the reaction. It is essential for DNA replication and repair of damaged DNA. This Ectopseudomonas mendocina (strain ymp) (Pseudomonas mendocina) protein is DNA ligase.